The following is a 153-amino-acid chain: 3-hydroxyacyl-[acyl-carrier-protein] dehydratase FabZ (153 aa).

Residue His-47 is part of the active site.

It belongs to the thioester dehydratase family. FabZ subfamily.

It is found in the cytoplasm. It catalyses the reaction a (3R)-hydroxyacyl-[ACP] = a (2E)-enoyl-[ACP] + H2O. Functionally, involved in unsaturated fatty acids biosynthesis. Catalyzes the dehydration of short chain beta-hydroxyacyl-ACPs and long chain saturated and unsaturated beta-hydroxyacyl-ACPs. The protein is 3-hydroxyacyl-[acyl-carrier-protein] dehydratase FabZ of Dichelobacter nodosus (strain VCS1703A).